The sequence spans 254 residues: Adenosylcobinamide-GDP ribazoletransferase (254 aa).

6 helical membrane passes run 36 to 56 (YYPL…TLLL), 61 to 81 (PLVT…GIHL), 114 to 134 (ALSA…LLAL), 138 to 158 (LVPY…LIGV), 197 to 217 (WVLQ…ILLF), and 232 to 252 (LYGA…FPLL).

The protein belongs to the CobS family. Mg(2+) is required as a cofactor.

It is found in the cell membrane. It catalyses the reaction alpha-ribazole + adenosylcob(III)inamide-GDP = adenosylcob(III)alamin + GMP + H(+). The catalysed reaction is alpha-ribazole 5'-phosphate + adenosylcob(III)inamide-GDP = adenosylcob(III)alamin 5'-phosphate + GMP + H(+). The protein operates within cofactor biosynthesis; adenosylcobalamin biosynthesis; adenosylcobalamin from cob(II)yrinate a,c-diamide: step 7/7. Functionally, joins adenosylcobinamide-GDP and alpha-ribazole to generate adenosylcobalamin (Ado-cobalamin). Also synthesizes adenosylcobalamin 5'-phosphate from adenosylcobinamide-GDP and alpha-ribazole 5'-phosphate. This chain is Adenosylcobinamide-GDP ribazoletransferase, found in Desulfitobacterium hafniense (strain Y51).